We begin with the raw amino-acid sequence, 189 residues long: Homeobox protein HD-2 (189 aa).

The homeobox; TALE-type DNA-binding region spans K119 to M181.

This sequence belongs to the TALE/KNOX homeobox family.

The protein resides in the nucleus. This Encephalitozoon cuniculi (strain GB-M1) (Microsporidian parasite) protein is Homeobox protein HD-2 (HD-2).